Here is a 118-residue protein sequence, read N- to C-terminus: Small ribosomal subunit protein uS13 (118 aa).

Positions 93 to 118 are disordered; that stretch reads RNLPVRGQRSKTNARTRKGPRKPIKR.

Belongs to the universal ribosomal protein uS13 family. In terms of assembly, part of the 30S ribosomal subunit. Forms a loose heterodimer with protein S19. Forms two bridges to the 50S subunit in the 70S ribosome.

Its function is as follows. Located at the top of the head of the 30S subunit, it contacts several helices of the 16S rRNA. In the 70S ribosome it contacts the 23S rRNA (bridge B1a) and protein L5 of the 50S subunit (bridge B1b), connecting the 2 subunits; these bridges are implicated in subunit movement. Contacts the tRNAs in the A and P-sites. This is Small ribosomal subunit protein uS13 from Saccharophagus degradans (strain 2-40 / ATCC 43961 / DSM 17024).